We begin with the raw amino-acid sequence, 217 residues long: Large ribosomal subunit protein uL29m (217 aa).

This sequence belongs to the universal ribosomal protein uL29 family. As to quaternary structure, component of the mitochondrial large ribosomal subunit. Mature mitochondrial ribosomes consist of a small (37S) and a large (54S) subunit. The 37S subunit contains at least 33 different proteins and 1 molecule of RNA (15S). The 54S subunit contains at least 45 different proteins and 1 molecule of RNA (21S).

It is found in the mitochondrion. In Aspergillus clavatus (strain ATCC 1007 / CBS 513.65 / DSM 816 / NCTC 3887 / NRRL 1 / QM 1276 / 107), this protein is Large ribosomal subunit protein uL29m (mrpl4).